Consider the following 388-residue polypeptide: Alcohol dehydrogenase patD (388 aa).

C46 is a Zn(2+) binding site. H47 is a binding site for NAD(+). Zn(2+) is bound by residues H67, E68, C101, C104, and C112. Residue H67 coordinates substrate. NAD(+)-binding positions include V198–G203, S295–L297, and E320–A322.

Belongs to the zinc-containing alcohol dehydrogenase family. Zn(2+) serves as cofactor.

It localises to the cytoplasm. The protein localises to the cytosol. It carries out the reaction neopatulin + NADPH + H(+) = (E)-ascladiol + NADP(+). Its pathway is mycotoxin biosynthesis; patulin biosynthesis. Functionally, alcohol dehydrogenase; part of the gene cluster that mediates the biosynthesis of patulin, an acetate-derived tetraketide mycotoxin produced by several fungal species that shows antimicrobial properties against several bacteria. PatD catalyzes the conversion of neopatulin into E-ascladiol. The pathway begins with the synthesis of 6-methylsalicylic acid by the polyketide synthase (PKS) patK via condensation of acetate and malonate units. The 6-methylsalicylic acid decarboxylase patG then catalyzes the decarboxylation of 6-methylsalicylic acid to yield m-cresol (also known as 3-methylphenol). These first reactions occur in the cytosol. The intermediate m-cresol is then transported into the endoplasmic reticulum where the cytochrome P450 monooxygenase patH converts it to m-hydroxybenzyl alcohol, which is further converted to gentisyl alcohol by the cytochrome P450 monooxygenase patI. The oxidoreductases patJ and patO further convert gentisyl alcohol to isoepoxydon in the vacuole. PatN catalyzes then the transformation of isoepoxydon into phyllostine. The cluster protein patF is responsible for the conversion from phyllostine to neopatulin whereas the alcohol dehydrogenase patD converts neopatulin to E-ascladiol. The steps between isoepoxydon and E-ascladiol occur in the cytosol, and E-ascladiol is probably secreted to the extracellular space by one of the cluster-specific transporters patC or patM. Finally, the secreted patulin synthase patE catalyzes the conversion of E-ascladiol to patulin. This Aspergillus clavatus (strain ATCC 1007 / CBS 513.65 / DSM 816 / NCTC 3887 / NRRL 1 / QM 1276 / 107) protein is Alcohol dehydrogenase patD.